Reading from the N-terminus, the 295-residue chain is Cyclin-G1 (295 aa).

It belongs to the cyclin family. Cyclin G subfamily.

The protein resides in the nucleus. Functionally, may play a role in growth regulation. Is associated with G2/M phase arrest in response to DNA damage. May be an intermediate by which p53 mediates its role as an inhibitor of cellular proliferation. In Pongo abelii (Sumatran orangutan), this protein is Cyclin-G1 (CCNG1).